The sequence spans 134 residues: Iron-sulfur cluster insertion protein ErpA (134 aa).

Iron-sulfur cluster is bound by residues C47, C126, and C128.

The protein belongs to the HesB/IscA family. In terms of assembly, homodimer. Requires iron-sulfur cluster as cofactor.

In terms of biological role, required for insertion of 4Fe-4S clusters for at least IspG. This is Iron-sulfur cluster insertion protein ErpA from Coxiella burnetii (strain RSA 331 / Henzerling II).